A 1312-amino-acid polypeptide reads, in one-letter code: Tetratricopeptide repeat protein 21B (1312 aa).

TPR repeat units follow at residues 4–38 (TDHY…YSND), 110–143 (PKAL…SNRS), 147–180 (LVLR…NKDI), 182–213 (ALIG…YPPF), 214–247 (LPAL…DGAN), and 325–358 (AEVA…DGNH). Residues 365 to 392 (VIQCQILQGQLEEAEQQLDFLHEIQESI) adopt a coiled-coil conformation. TPR repeat units lie at residues 493–526 (TEPL…DTAC), 528–560 (DFHL…NFKV), 564–597 (PLYH…QEMK), 615–648 (VSIY…FGGT), 720–753 (PHTS…NPQD), 755–787 (SLAN…SGQD), 789–820 (LCCD…EPVS), 829–861 (AKCL…QQRI), 881–914 (SEIC…SQDS), 916–947 (VKLQ…HSFK), 948–981 (EEAA…NPDN), 983–1015 (AVLS…SSRT), 1019–1052 (PGYN…SEWG), 1193–1226 (EKSW…NKSC), 1228–1260 (KAYE…SNQS), and 1262–1295 (PAVG…HPTY).

Belongs to the TTC21 family. As to quaternary structure, component of the IFT complex A (IFT-A).

Functionally, component of the IFT complex A (IFT-A), a complex required for retrograde ciliary transport and entry into cilia of G protein-coupled receptors (GPCRs). Negatively modulates the SHH signal transduction. The polypeptide is Tetratricopeptide repeat protein 21B (ttc21b) (Xenopus laevis (African clawed frog)).